We begin with the raw amino-acid sequence, 306 residues long: Ribonuclease Z (306 aa).

Residues His-63, His-65, Asp-67, His-68, His-142, Asp-213, and His-271 each coordinate Zn(2+). The active-site Proton acceptor is the Asp-67.

This sequence belongs to the RNase Z family. Homodimer. It depends on Zn(2+) as a cofactor.

The enzyme catalyses Endonucleolytic cleavage of RNA, removing extra 3' nucleotides from tRNA precursor, generating 3' termini of tRNAs. A 3'-hydroxy group is left at the tRNA terminus and a 5'-phosphoryl group is left at the trailer molecule.. Its function is as follows. Zinc phosphodiesterase, which displays some tRNA 3'-processing endonuclease activity. Probably involved in tRNA maturation, by removing a 3'-trailer from precursor tRNA. In Oceanobacillus iheyensis (strain DSM 14371 / CIP 107618 / JCM 11309 / KCTC 3954 / HTE831), this protein is Ribonuclease Z.